The primary structure comprises 310 residues: Methionyl-tRNA formyltransferase (310 aa).

109–112 (SLLP) is a (6S)-5,6,7,8-tetrahydrofolate binding site.

Belongs to the Fmt family.

It carries out the reaction L-methionyl-tRNA(fMet) + (6R)-10-formyltetrahydrofolate = N-formyl-L-methionyl-tRNA(fMet) + (6S)-5,6,7,8-tetrahydrofolate + H(+). Attaches a formyl group to the free amino group of methionyl-tRNA(fMet). The formyl group appears to play a dual role in the initiator identity of N-formylmethionyl-tRNA by promoting its recognition by IF2 and preventing the misappropriation of this tRNA by the elongation apparatus. The sequence is that of Methionyl-tRNA formyltransferase from Chloroflexus aurantiacus (strain ATCC 29366 / DSM 635 / J-10-fl).